The following is a 202-amino-acid chain: LexA repressor (202 aa).

A DNA-binding region (H-T-H motif) is located at residues 28 to 48 (RAEIAQRLGFRSPNAAEEHLK). Catalysis depends on for autocatalytic cleavage activity residues serine 119 and lysine 156.

This sequence belongs to the peptidase S24 family. Homodimer.

It carries out the reaction Hydrolysis of Ala-|-Gly bond in repressor LexA.. In terms of biological role, represses a number of genes involved in the response to DNA damage (SOS response), including recA and lexA. Binds to the 16 bp palindromic sequence 5'-CTGTATATATATACAG-3'. In the presence of single-stranded DNA, RecA interacts with LexA causing an autocatalytic cleavage which disrupts the DNA-binding part of LexA, leading to derepression of the SOS regulon and eventually DNA repair. The sequence is that of LexA repressor from Enterobacter sp. (strain 638).